A 425-amino-acid polypeptide reads, in one-letter code: MEMKNVKGTKDYLPEEQVLRNKIKRACEDTFERYGCKSLETPTLNMYELMSYKYGGGDEILKEIYTLRDQGKRELALRYDLTIPFAKVVAMNPNIRLPFKRYEIGKVFRDGPIKQGRFREFIQCDVDIVGVESVMAEAELMSMAFELFRTLNLEVTIQYNNRKLLNGILESINIPTERTSDVILSLDKIEKIGIDGVRKDVLERGISEEMADTICNTVLSCLKLSIDDFKDAFNTPLVAEGVNELQQLQQYLIALGINENAIFNPFLARGLTMYTGTVYEIFLKDGSITSSIGSGGRYDNIIGAFRGDNMNYPTVGISFGLDVIYTALSQKETISSTADIFIIPIGTELQCLQIAQQLRSTTSLKVELELTGRKLKRALNYANKENIPYVLIIGEEELSTETAMLRNMKEGSEVKVPLSSLSNYL.

This sequence belongs to the class-II aminoacyl-tRNA synthetase family. Homodimer.

The protein resides in the cytoplasm. It catalyses the reaction tRNA(His) + L-histidine + ATP = L-histidyl-tRNA(His) + AMP + diphosphate + H(+). This Bacillus cereus (strain ZK / E33L) protein is Histidine--tRNA ligase 1.